Reading from the N-terminus, the 204-residue chain is Proteasome subunit beta type-2-A (204 aa).

Residue methionine 1 is modified to N-acetylmethionine.

It belongs to the peptidase T1B family. Component of the 20S core complex of the 26S proteasome. The 26S proteasome is composed of a core protease (CP), known as the 20S proteasome, capped at one or both ends by the 19S regulatory particle (RP/PA700). The 20S proteasome core is composed of 28 subunits that are arranged in four stacked rings, resulting in a barrel-shaped structure. The two end rings are each formed by seven alpha subunits, and the two central rings are each formed by seven beta subunits. The catalytic chamber with the active sites is on the inside of the barrel.

It is found in the cytoplasm. It localises to the nucleus. In terms of biological role, non-catalytic component of the proteasome, a multicatalytic proteinase complex which is characterized by its ability to cleave peptides with Arg, Phe, Tyr, Leu, and Glu adjacent to the leaving group at neutral or slightly basic pH. The proteasome has an ATP-dependent proteolytic activity. This Arabidopsis thaliana (Mouse-ear cress) protein is Proteasome subunit beta type-2-A (PBD1).